The sequence spans 683 residues: U4/U6 small nuclear ribonucleoprotein Prp3 (683 aa).

Residues M1–R87 form the PWI domain. Over residues G73–G107 the composition is skewed to basic and acidic residues. The segment at G73–G135 is disordered. K139 is covalently cross-linked (Glycyl lysine isopeptide (Lys-Gly) (interchain with G-Cter in SUMO2)). The interval I153–I183 is disordered. S164 carries the phosphoserine modification. T167 carries the post-translational modification Phosphothreonine. Residues K244 and K252 each participate in a glycyl lysine isopeptide (Lys-Gly) (interchain with G-Cter in SUMO2) cross-link. The mediates interaction with SART3 stretch occupies residues N416–N550. S619 carries the post-translational modification Phosphoserine.

In terms of assembly, component of the precatalytic spliceosome (spliceosome B complex). Component of the U4/U6-U5 tri-snRNP complex, a building block of the precatalytic spliceosome (spliceosome B complex). The U4/U6-U5 tri-snRNP complex is composed of the U4, U6 and U5 snRNAs and at least PRPF3, PRPF4, PRPF6, PRPF8, PRPF31, SNRNP200, TXNL4A, SNRNP40, SNRPB, SNRPD1, SNRPD2, SNRPD3, SNRPE, SNRPF, SNRPG, DDX23, CD2BP2, PPIH, SNU13, EFTUD2, SART1 and USP39, plus LSM2, LSM3, LSM4, LSM5, LSM6, LSM7 and LSM8. Interacts directly with PRPF4. Part of a heteromeric complex containing PPIH, PRPF3 and PRPF4 that is stable in the absence of RNA. Interacts with SART3; the interaction is direct and recruits the deubiquitinase USP4 to PRPF3. Interacts with PRPF19. Interacts ('Lys-63'-linked polyubiquitinated) with PRPF8 (via the MPN (JAB/Mov34) domain); may stabilize the U4/U6-U5 tri-snRNP complex. Interacts with ERCC6. In terms of processing, ubiquitinated. Undergoes 'Lys-63'-linked polyubiquitination by PRPF19 and deubiquitination by USP4. 'Lys-63'-linked ubiquitination increases the affinity for PRPF8 and may regulate the assembly of the U4/U6-U5 tri-snRNP complex.

It is found in the nucleus. The protein localises to the nucleus speckle. Functionally, plays a role in pre-mRNA splicing as component of the U4/U6-U5 tri-snRNP complex that is involved in spliceosome assembly, and as component of the precatalytic spliceosome (spliceosome B complex). The sequence is that of U4/U6 small nuclear ribonucleoprotein Prp3 (PRPF3) from Bos taurus (Bovine).